The following is a 186-amino-acid chain: MNDSGVSKTYASALLGATNVPEEVEQELGDLAQLLFKDEKVKNFFLSPTVSNEEKEKVLIKNLRGKISDITLNFLGVLLNRGRIIHLPEIQKQFTVELDKKKGRVRAQVRSYPSLEPAQAAKLGSILSEKFKSEFILEVSEDKSLLGGFVVQFNDLKIEKSIASQLGEIKKSMLEKKLPVGAIYEN.

This sequence belongs to the ATPase delta chain family. F-type ATPases have 2 components, F(1) - the catalytic core - and F(0) - the membrane proton channel. F(1) has five subunits: alpha(3), beta(3), gamma(1), delta(1), epsilon(1). F(0) has three main subunits: a(1), b(2) and c(10-14). The alpha and beta chains form an alternating ring which encloses part of the gamma chain. F(1) is attached to F(0) by a central stalk formed by the gamma and epsilon chains, while a peripheral stalk is formed by the delta and b chains.

The protein localises to the cell inner membrane. In terms of biological role, f(1)F(0) ATP synthase produces ATP from ADP in the presence of a proton or sodium gradient. F-type ATPases consist of two structural domains, F(1) containing the extramembraneous catalytic core and F(0) containing the membrane proton channel, linked together by a central stalk and a peripheral stalk. During catalysis, ATP synthesis in the catalytic domain of F(1) is coupled via a rotary mechanism of the central stalk subunits to proton translocation. This protein is part of the stalk that links CF(0) to CF(1). It either transmits conformational changes from CF(0) to CF(1) or is implicated in proton conduction. The chain is ATP synthase subunit delta from Leptospira interrogans serogroup Icterohaemorrhagiae serovar copenhageni (strain Fiocruz L1-130).